A 155-amino-acid chain; its full sequence is Ribosomal RNA large subunit methyltransferase H 1 (155 aa).

S-adenosyl-L-methionine is bound by residues L76, G108, and 127–132 (FSKMTF).

The protein belongs to the RNA methyltransferase RlmH family. Homodimer.

The protein resides in the cytoplasm. The enzyme catalyses pseudouridine(1915) in 23S rRNA + S-adenosyl-L-methionine = N(3)-methylpseudouridine(1915) in 23S rRNA + S-adenosyl-L-homocysteine + H(+). Its function is as follows. Specifically methylates the pseudouridine at position 1915 (m3Psi1915) in 23S rRNA. This Thermoanaerobacter pseudethanolicus (strain ATCC 33223 / 39E) (Clostridium thermohydrosulfuricum) protein is Ribosomal RNA large subunit methyltransferase H 1.